A 345-amino-acid polypeptide reads, in one-letter code: Gibberellin receptor GID1A (345 aa).

Position 2 is an N-acetylalanine (alanine 2). The Involved in the stabilization of the negatively charged intermediate by the formation of the oxyanion hole motif lies at 113–115 (HGG). Gibberellin A4 is bound by residues 115-116 (GS), tyrosine 127, and serine 191. Residues serine 116, tyrosine 127, serine 191, and phenylalanine 238 each coordinate gibberellin A3. Serine 191 is a catalytic residue. The active site involves aspartate 289. Residue glycine 320 coordinates gibberellin A4. Glycine 320 lines the gibberellin A3 pocket.

Belongs to the 'GDXG' lipolytic enzyme family. Interacts (via N-terminus) with the DELLA proteins GAI, RGA, RGL1, RGL2 and RGL3 (via N-terminus) in a GA-dependent manner. In terms of tissue distribution, widely expressed.

It is found in the nucleus. Functionally, functions as a soluble gibberellin (GA) receptor. GA is an essential hormone that regulates growth and development in plants. Binds with high affinity the biologically active gibberellin GA4, but has no affinity for the biologically inactive GAs. In response to GA, interacts with specific DELLA proteins, known as repressors of GA-induced growth, and targets them for degradation via proteasome. Seems to be required for GA signaling that controls root growth, seed germination, stem elongation and flower development. Partially redundant with GID1B and GID1C. This Arabidopsis thaliana (Mouse-ear cress) protein is Gibberellin receptor GID1A (GID1A).